Reading from the N-terminus, the 296-residue chain is 4-hydroxy-tetrahydrodipicolinate synthase (296 aa).

T49 is a binding site for pyruvate. Y137 (proton donor/acceptor) is an active-site residue. Catalysis depends on K165, which acts as the Schiff-base intermediate with substrate. I207 is a binding site for pyruvate.

This sequence belongs to the DapA family. In terms of assembly, homotetramer; dimer of dimers.

It is found in the cytoplasm. The enzyme catalyses L-aspartate 4-semialdehyde + pyruvate = (2S,4S)-4-hydroxy-2,3,4,5-tetrahydrodipicolinate + H2O + H(+). It participates in amino-acid biosynthesis; L-lysine biosynthesis via DAP pathway; (S)-tetrahydrodipicolinate from L-aspartate: step 3/4. Catalyzes the condensation of (S)-aspartate-beta-semialdehyde [(S)-ASA] and pyruvate to 4-hydroxy-tetrahydrodipicolinate (HTPA). The chain is 4-hydroxy-tetrahydrodipicolinate synthase from Rhodopseudomonas palustris (strain BisA53).